A 705-amino-acid chain; its full sequence is ATP-dependent DNA helicase Q-like 2 (705 aa).

A coiled-coil region spans residues 1-30; it reads MESEAIQEDLQNLDVELKDVQGQISALIEH. Positions 98–273 constitute a Helicase ATP-binding domain; that stretch reads INAIMTGRDV…IEMLHIPKCV (176 aa). An ATP-binding site is contributed by 111-118; the sequence is MAAGGGKS. Residues 217 to 220 carry the DEAH box motif; it reads DEAH. Residues 298–450 enclose the Helicase C-terminal domain; that stretch reads VVDEIAEFIR…DIVRYCQSKT (153 aa). The HRDC domain maps to 591-670; that stretch reads SITFSGLELK…MRHEAVSEQL (80 aa). The tract at residues 668–705 is disordered; that stretch reads EQLVEDPTKEETCKSRLRKRAKTQKDVVLVESSGEEEA.

It belongs to the helicase family. RecQ subfamily. Interacts with WEX. The cofactor is Mg(2+). Requires Mn(2+) as cofactor. As to expression, expressed in shoots and flowers. Expressed in young leaves, inflorescences, roots, shoot apical meristem, young siliques, and mature green siliques.

Its subcellular location is the nucleus. The catalysed reaction is Couples ATP hydrolysis with the unwinding of duplex DNA by translocating in the 3'-5' direction.. It carries out the reaction ATP + H2O = ADP + phosphate + H(+). Functionally, 3'-5' DNA helicase that may play a role in the repair of DNA. Its DNA unwinding activity in vitro is dependent on magnesium, and ATP or dATP. Can use GTP/dGTP, CTP/dCTP or UTP/dUTP as nucleotide cofactors. Catalyzes Holliday junction branch migration and replication fork regression. Disrupts D-loop structures. Unwinds G-quadruplex DNA, found in telomeric DNA. In Arabidopsis thaliana (Mouse-ear cress), this protein is ATP-dependent DNA helicase Q-like 2.